Consider the following 386-residue polypeptide: Putrescine N-methyltransferase 4 (386 aa).

Polar residues-rich tracts occupy residues Met-1–Phe-14, Gly-23–Asn-48, and His-57–Glu-87. Positions Met-1–Glu-87 are disordered. A PABS domain is found at Leu-97 to Thr-334. S-adenosyl-L-methionine-binding positions include Gln-128, Glu-203, and Asp-234–Gly-235. The active-site Proton acceptor is the Asp-253. Tyr-322 is a binding site for S-adenosyl-L-methionine.

It belongs to the class I-like SAM-binding methyltransferase superfamily. Putrescine methyltransferase family. As to expression, predominantly expressed in roots.

It catalyses the reaction putrescine + S-adenosyl-L-methionine = N-methylputrescine + S-adenosyl-L-homocysteine + H(+). The protein operates within alkaloid biosynthesis; nicotine biosynthesis. Involved in the biosynthesis of pyridine alkaloid natural products, leading mainly to the production of anabasine, anatabine, nicotine and nornicotine, effective deterrents against herbivores with antiparasitic and pesticide properties (neurotoxins); nornicotine serves as the precursor in the synthesis of the carcinogen compound N'-nitrosonornicotine (NNN). Methyltransferase that mediates the conversion of putrescine to N-methylputrescine. Promotes leaves ripening. The sequence is that of Putrescine N-methyltransferase 4 from Nicotiana tabacum (Common tobacco).